Consider the following 502-residue polypeptide: Keratin, type II cytoskeletal 8 (502 aa).

The head stretch occupies residues 1–98 (MSVRSTKVTY…DPSIQQVRTE (98 aa)). Phosphoserine occurs at positions 13, 26, 37, and 40. The coil 1A stretch occupies residues 99 to 134 (EKEQIKTLNNKFASFIDKVRFLEQQNKMLETKWNLL). The region spanning 99-410 (EKEQIKTLNN…KLLEGEESRL (312 aa)) is the IF rod domain. The linker 1 stretch occupies residues 135-151 (QNQKTTRSNMDGMFEAY). The interval 152–243 (ISNLRRQLDG…QLYEEELREM (92 aa)) is coil 1B. Positions 244–267 (QSQISDTSVVLSMDNNRSLDLDGI) are linker 12. The interval 268 to 406 (IAEVRAQYED…ATYRKLLEGE (139 aa)) is coil 2. The necessary for interaction with PNN stretch occupies residues 269-390 (AEVRAQYEDV…DYQELMNVKL (122 aa)). Residues 407 to 502 (ESRLESGFQN…SESSDVFSKP (96 aa)) form a tail region. Residues serine 425, serine 428, serine 436, and serine 444 each carry the phosphoserine modification.

This sequence belongs to the intermediate filament family. Heterotetramer of two type I and two type II keratins. Keratin-8 associates with keratin-18. In terms of tissue distribution, expressed in oocytes, eggs, embryos, liver and intestinal mucosa.

It is found in the cytoplasm. Its subcellular location is the nucleus. It localises to the nucleoplasm. The protein resides in the nucleus matrix. In terms of biological role, together with KRT19, helps to link the contractile apparatus to dystrophin at the costameres of striated muscle. The polypeptide is Keratin, type II cytoskeletal 8 (Xenopus laevis (African clawed frog)).